The primary structure comprises 378 residues: Erythronate-4-phosphate dehydrogenase (378 aa).

S45 and T66 together coordinate substrate. Positions 146 and 175 each coordinate NAD(+). Residue R208 is part of the active site. Residue D232 participates in NAD(+) binding. Residue E237 is part of the active site. H254 acts as the Proton donor in catalysis. G257 is a binding site for NAD(+). Y258 contributes to the substrate binding site.

Belongs to the D-isomer specific 2-hydroxyacid dehydrogenase family. PdxB subfamily. Homodimer.

It localises to the cytoplasm. It catalyses the reaction 4-phospho-D-erythronate + NAD(+) = (R)-3-hydroxy-2-oxo-4-phosphooxybutanoate + NADH + H(+). The protein operates within cofactor biosynthesis; pyridoxine 5'-phosphate biosynthesis; pyridoxine 5'-phosphate from D-erythrose 4-phosphate: step 2/5. In terms of biological role, catalyzes the oxidation of erythronate-4-phosphate to 3-hydroxy-2-oxo-4-phosphonooxybutanoate. This is Erythronate-4-phosphate dehydrogenase from Escherichia coli O8 (strain IAI1).